The chain runs to 206 residues: MRASAGERERVEALYAWERRLQRQGVARIAGVDEAGRGPLAGPVTAAAVILPPGLFIAGLNDSKKVPPARRRELAAVIKKESLAWGIGWVSVKEIDCLNILAASRWAMRRALSALAIRPDHVLIDGMELPGLKIPQTPLVGGDALSASIAAASILAKVARDELMVAYDAVFQGYGLAGNKGYPTREHREALRRLGPCALHRRSFKH.

Positions 27–206 constitute an RNase H type-2 domain; the sequence is ARIAGVDEAG…CALHRRSFKH (180 aa). Positions 33, 34, and 125 each coordinate a divalent metal cation.

Belongs to the RNase HII family. Mn(2+) is required as a cofactor. It depends on Mg(2+) as a cofactor.

It localises to the cytoplasm. It catalyses the reaction Endonucleolytic cleavage to 5'-phosphomonoester.. Endonuclease that specifically degrades the RNA of RNA-DNA hybrids. In Moorella thermoacetica (strain ATCC 39073 / JCM 9320), this protein is Ribonuclease HII.